The chain runs to 522 residues: GMP synthase [glutamine-hydrolyzing] (522 aa).

A Glutamine amidotransferase type-1 domain is found at 9–204; that stretch reads KILILDFGAQ…VVDICGCQTL (196 aa). The active-site Nucleophile is the cysteine 86. Catalysis depends on residues histidine 178 and glutamate 180. Residues 205–397 enclose the GMPS ATP-PPase domain; sequence WTAANIIEDQ…LGLPHAMVYR (193 aa). Position 232 to 238 (232 to 238) interacts with ATP; it reads SGGVDSS.

In terms of assembly, homodimer.

The catalysed reaction is XMP + L-glutamine + ATP + H2O = GMP + L-glutamate + AMP + diphosphate + 2 H(+). It functions in the pathway purine metabolism; GMP biosynthesis; GMP from XMP (L-Gln route): step 1/1. In terms of biological role, catalyzes the synthesis of GMP from XMP. The chain is GMP synthase [glutamine-hydrolyzing] from Xylella fastidiosa (strain M12).